The sequence spans 372 residues: DNA replication and repair protein RecF (372 aa).

30–37 (GENGQGKT) is an ATP binding site.

The protein belongs to the RecF family.

The protein localises to the cytoplasm. Functionally, the RecF protein is involved in DNA metabolism; it is required for DNA replication and normal SOS inducibility. RecF binds preferentially to single-stranded, linear DNA. It also seems to bind ATP. This is DNA replication and repair protein RecF from Anaeromyxobacter dehalogenans (strain 2CP-C).